The primary structure comprises 20 residues: Fibrinolytic zinc metalloproteinase (20 aa).

One can recognise a Peptidase M12B domain in the interval 7–20 (RYVQLVITVDHVMN).

Zn(2+) is required as a cofactor.

It is found in the secreted. In terms of biological role, hydrolyzes alpha and beta chains of human fibrinogen and human fibrin. No activity against the gamma chain of human fibrinogen, human thrombin, bovine serum albumin, ovalbumin and hemoglobin. Has anticoagulant activity on human plasma and protects mice against death due from experimentally induced platelet thromboembolism with an ED(50) of 40 ug/kg. This Ganoderma lucidum (Ling zhi medicinal fungus) protein is Fibrinolytic zinc metalloproteinase.